A 486-amino-acid polypeptide reads, in one-letter code: UDP-N-acetylmuramate--L-alanine ligase (486 aa).

Position 123-129 (123-129) interacts with ATP; it reads GTHGKTT.

This sequence belongs to the MurCDEF family.

The protein localises to the cytoplasm. The enzyme catalyses UDP-N-acetyl-alpha-D-muramate + L-alanine + ATP = UDP-N-acetyl-alpha-D-muramoyl-L-alanine + ADP + phosphate + H(+). It participates in cell wall biogenesis; peptidoglycan biosynthesis. Its function is as follows. Cell wall formation. The chain is UDP-N-acetylmuramate--L-alanine ligase from Pseudomonas fluorescens (strain Pf0-1).